The primary structure comprises 987 residues: Rho GTPase-activating protein 6 (987 aa).

Positions 1–21 (MSAQSLLHSVFSCSSPASGGT) are enriched in polar residues. Disordered regions lie at residues 1–60 (MSAQ…RGST), 76–117 (SRLA…SGSF), and 144–170 (GSGSASSRSPASILSSSGGGPNGIFSS). Serine 37 is modified (phosphoserine). Residues 44–57 (GGCGSEMGAEGGLR) show a composition bias toward gly residues. Residues 100 to 115 (SSFSTPSTPQEKSPSG) are compositionally biased toward polar residues. A compositionally biased stretch (low complexity) spans 144 to 159 (GSGSASSRSPASILSS). Phosphoserine is present on serine 265. Residues 324–363 (KQNKELSSSNSSLSSTSETPNESTSPNTPEPAPRARRRGA) form a disordered region. Positions 328–350 (ELSSSNSSLSSTSETPNESTSPN) are enriched in low complexity. Positions 344–354 (NESTSPNTPEP) match the SH3-binding motif. The residue at position 365 (serine 365) is a Phosphoserine. The Rho-GAP domain occupies 403–604 (LSLNPIYRQV…KMIENYEALF (202 aa)). A disordered region spans residues 641 to 676 (DILQTEVSFSMGGRHSSTDSNKASSGDISPYDNNSP). The segment covering 658–676 (TDSNKASSGDISPYDNNSP) has biased composition (polar residues). Residues serine 669, serine 675, serine 682, serine 713, serine 758, serine 776, serine 781, serine 790, and serine 824 each carry the phosphoserine modification. The segment at 709-731 (GHLSSPKSKSRESSPGPRLGKEM) is disordered. 2 disordered regions span residues 825 to 847 (TPHIQDGSRGTRRPAASSDPFLS) and 863 to 953 (WLQS…QDKQ). The segment covering 939–948 (LSSAYSLSAS) has biased composition (low complexity). Phosphoserine is present on residues serine 941 and serine 944.

As to expression, expressed in retina and lung.

The protein resides in the cytoplasm. GTPase activator for the Rho-type GTPases by converting them to an inactive GDP-bound state. Could regulate the interactions of signaling molecules with the actin cytoskeleton. Promotes continuous elongation of cytoplasmic processes during cell motility and simultaneous retraction of the cell body changing the cell morphology. The polypeptide is Rho GTPase-activating protein 6 (Arhgap6) (Mus musculus (Mouse)).